A 2364-amino-acid chain; its full sequence is Spectrin beta chain, non-erythrocytic 1 (2364 aa).

Position 2 is an N-acetylthreonine (Thr-2). The actin-binding stretch occupies residues Thr-2 to His-275. A phosphoserine mark is found at Ile-14 and Ser-36. 2 consecutive Calponin-homology (CH) domains span residues Ala-54–Gln-158 and Lys-173–Ser-278. Lys-90 bears the N6-acetyllysine mark. Ser-228 is subject to Phosphoserine. Spectrin repeat units lie at residues Met-303–Arg-411, Leu-423–Glu-525, Leu-530–Glu-636, Arg-639–Glu-742, Leu-745–Asp-847, Ala-850–Leu-952, Ile-957–Glu-1060, Lys-1063–Ser-1166, Ala-1170–Arg-1258, Asp-1276–Leu-1376, Lys-1381–Leu-1482, Glu-1486–Glu-1590, His-1592–Glu-1696, His-1698–Leu-1801, and Tyr-1805–Leu-1907. A phosphoserine mark is found at Ser-817, Ser-825, Ser-903, Ser-1057, Ser-1076, Ser-1079, and Ser-1237. Residues Ser-1388, Ser-1447, and Ser-1557 each carry the phosphoserine modification. An interaction with ANK2 region spans residues Ile-1563–Glu-2093. Tyr-1805 is modified (phosphotyrosine). Residues Lys-1815, Lys-1913, and Lys-1989 each carry the N6-acetyllysine modification. 2 Spectrin repeats span residues Phe-1914 to Arg-2014 and Glu-2018 to Lys-2097. A disordered region spans residues Arg-2089–Pro-2196. Residues Ser-2102, Ser-2128, and Ser-2138 each carry the phosphoserine modification. Polar residues predominate over residues Ser-2115–Gly-2131. Residues Val-2145–Pro-2166 show a composition bias toward polar residues. A Phosphothreonine modification is found at Thr-2147. Ser-2148 carries the phosphoserine modification. A mediates interaction with CAMSAP1 region spans residues Glu-2149–Lys-2177. At Thr-2159 the chain carries Phosphothreonine. 5 positions are modified to phosphoserine: Ser-2160, Ser-2161, Ser-2164, Ser-2165, and Ser-2169. Thr-2171 carries the post-translational modification Phosphothreonine. A phosphoserine mark is found at Ser-2172 and Ser-2184. A compositionally biased stretch (polar residues) spans Ser-2184–Pro-2196. A phosphothreonine mark is found at Thr-2187 and Thr-2195. Residues Ser-2197 to Ser-2307 form the PH domain. The interval Asp-2309–Lys-2364 is disordered. Ser-2314 and Ser-2319 each carry phosphoserine. A compositionally biased stretch (polar residues) spans Ser-2314–Ser-2341. Thr-2320 carries the post-translational modification Phosphothreonine. Ser-2324 carries O-linked (GlcNAc) serine glycosylation. A Phosphothreonine modification is found at Thr-2328. Phosphoserine occurs at positions 2340 and 2341. The span at Pro-2342–Phe-2357 shows a compositional bias: basic and acidic residues.

This sequence belongs to the spectrin family. In terms of assembly, interacts with CAMSAP1. Interacts with ANK2. Interacts with CPNE4 (via VWFA domain). Like erythrocyte spectrin, the spectrin-like proteins are capable to form dimers which can further associate to tetramers. Can form heterodimers with SPTAN1. Isoform Short cannot bind to the axonal protein fodaxin. In terms of tissue distribution, isoform 2 is present in brain, lung and kidney (at protein level).

It localises to the cytoplasm. It is found in the cytoskeleton. Its subcellular location is the myofibril. The protein localises to the sarcomere. The protein resides in the m line. It localises to the cytosol. It is found in the cell membrane. Fodrin, which seems to be involved in secretion, interacts with calmodulin in a calcium-dependent manner and is thus candidate for the calcium-dependent movement of the cytoskeleton at the membrane. Plays a critical role in central nervous system development and function. The polypeptide is Spectrin beta chain, non-erythrocytic 1 (SPTBN1) (Homo sapiens (Human)).